Reading from the N-terminus, the 328-residue chain is Beta-ketoacyl-[acyl-carrier-protein] synthase III (328 aa).

Catalysis depends on residues C113 and H252. Residues 253–257 (QANLR) form an ACP-binding region. N282 is a catalytic residue.

This sequence belongs to the thiolase-like superfamily. FabH family. Homodimer.

Its subcellular location is the cytoplasm. It catalyses the reaction malonyl-[ACP] + acetyl-CoA + H(+) = 3-oxobutanoyl-[ACP] + CO2 + CoA. Its pathway is lipid metabolism; fatty acid biosynthesis. Catalyzes the condensation reaction of fatty acid synthesis by the addition to an acyl acceptor of two carbons from malonyl-ACP. Catalyzes the first condensation reaction which initiates fatty acid synthesis and may therefore play a role in governing the total rate of fatty acid production. Possesses both acetoacetyl-ACP synthase and acetyl transacylase activities. Its substrate specificity determines the biosynthesis of branched-chain and/or straight-chain of fatty acids. This is Beta-ketoacyl-[acyl-carrier-protein] synthase III from Campylobacter fetus subsp. fetus (strain 82-40).